We begin with the raw amino-acid sequence, 198 residues long: Nicotinamidase 3 (198 aa).

This sequence belongs to the isochorismatase family.

The catalysed reaction is nicotinamide + H2O = nicotinate + NH4(+). Its pathway is cofactor biosynthesis; nicotinate biosynthesis; nicotinate from nicotinamide: step 1/1. In terms of biological role, catalyzes the deamidation of nicotinamide, an early step in the NAD(+) salvage pathway. Prevents the accumulation of intracellular nicotinamide, a known inhibitor of poly(ADP-ribose) polymerases (PARP enzymes). This Arabidopsis thaliana (Mouse-ear cress) protein is Nicotinamidase 3.